The following is a 37-amino-acid chain: Large ribosomal subunit protein bL36 (37 aa).

It belongs to the bacterial ribosomal protein bL36 family.

The sequence is that of Large ribosomal subunit protein bL36 from Trichodesmium erythraeum (strain IMS101).